Here is a 304-residue protein sequence, read N- to C-terminus: Recombination-associated protein RdgC (304 aa).

The protein belongs to the RdgC family.

It is found in the cytoplasm. The protein resides in the nucleoid. May be involved in recombination. The sequence is that of Recombination-associated protein RdgC from Shewanella oneidensis (strain ATCC 700550 / JCM 31522 / CIP 106686 / LMG 19005 / NCIMB 14063 / MR-1).